The sequence spans 170 residues: Transcription factor E (170 aa).

Residues M1–K93 form the HTH TFE/IIEalpha-type domain.

This sequence belongs to the TFE family. Monomer. Interaction with RNA polymerase subunits RpoF and RpoE is necessary for Tfe stimulatory transcription activity. Able to interact with Tbp and RNA polymerase in the absence of DNA promoter. Interacts both with the preinitiation and elongation complexes.

In terms of biological role, transcription factor that plays a role in the activation of archaeal genes transcribed by RNA polymerase. Facilitates transcription initiation by enhancing TATA-box recognition by TATA-box-binding protein (Tbp), and transcription factor B (Tfb) and RNA polymerase recruitment. Not absolutely required for transcription in vitro, but particularly important in cases where Tbp or Tfb function is not optimal. It dynamically alters the nucleic acid-binding properties of RNA polymerases by stabilizing the initiation complex and destabilizing elongation complexes. Seems to translocate with the RNA polymerase following initiation and acts by binding to the non template strand of the transcription bubble in elongation complexes. The sequence is that of Transcription factor E from Pyrobaculum aerophilum (strain ATCC 51768 / DSM 7523 / JCM 9630 / CIP 104966 / NBRC 100827 / IM2).